We begin with the raw amino-acid sequence, 1024 residues long: Protein sumv-1 (1024 aa).

Disordered stretches follow at residues 447–486, 501–564, 577–617, 645–664, 710–739, and 773–1024; these read DASQ…KKMP, NFQG…RRGV, PSRH…RSQA, SQMA…GSPQ, VRSG…DTVQ, and AGNS…EEEL. Polar residues-rich tracts occupy residues 467–486, 501–514, and 528–542; these read SFGT…KKMP, NFQG…SSAT, and RSQQ…QTQD. The span at 584 to 600 shows a compositional bias: low complexity; that stretch reads SPLTPSTSTSSSQLLAP. The span at 605–617 shows a compositional bias: polar residues; the sequence is QPGTSSQTFRSQA. 2 stretches are compositionally biased toward low complexity: residues 710–730 and 784–809; these read VRSG…ASGS and AGAP…ASTS. Positions 810–832 are enriched in polar residues; sequence VPEPTKSSESSVDPQSDVSFSNP. A compositionally biased stretch (low complexity) spans 859 to 870; sequence TLASESTSSEAT. Residues 873–883 are compositionally biased toward polar residues; that stretch reads HDTTSSSSAET. Residues 903–914 are compositionally biased toward basic and acidic residues; the sequence is PEKEKEKIDRPK. 3 stretches are compositionally biased toward low complexity: residues 916–943, 952–962, and 970–986; these read PKSS…NQAI, SASTSSSAAST, and LLAE…QQQA. Positions 987–998 are enriched in polar residues; it reads IGSTSKNGGSTK.

It localises to the nucleus. The protein localises to the cytoplasm. The protein resides in the cell projection. It is found in the axon. Nuclear factor that influences the activity of genes involved in vulval development. The protein is Protein sumv-1 of Caenorhabditis elegans.